The chain runs to 339 residues: uncharacterized protein (339 aa).

Zn(2+) contacts are provided by His17, His19, His197, and Asp278. Asp279 is a substrate binding site.

It belongs to the metallo-dependent hydrolases superfamily. Adenosine and AMP deaminases family. Adenine deaminase type 2 subfamily. The cofactor is Zn(2+).

It is found in the cytoplasm. It localises to the nucleus. This is an uncharacterized protein from Schizosaccharomyces pombe (strain 972 / ATCC 24843) (Fission yeast).